The following is a 637-amino-acid chain: MEICTKGSRKHLTSRASEPSYNVPENQYVLYVVSSTLSIVKQLVKVAESKKSRFSGAIEKLNERLDSLKDYRIINRDLVVKDLERLKKRFDTEVINAELSEQLAKINVNLSRSYSEKGYLRLEKATGSENEWWAKIKPSQNDDWQQFEPDGYTIFSSRDHYASLFKSYSDYEIEAKIPLPLRRGKAVVLYPEYISRICVLPESRSIQREQENFTKLRDKGIALSKKDWQAKLTTDELAEQEKERATINKRLGYFATEHEKVGIVHKALEPKLKPFQQIEKEWRQCKVKSKSTFPNSMTFVQNPAYQAVHSGFKKLKEQIGLADEDILLSLEKIEAIGLVNMPLLYERWCLLQIIKVLTQAFRYQPEDNWKRKLIANIQGNEEQISIQFFNPSVSRAITLQYEPFLANGKRPDFVLDVEAITKSGNQISKRLVVDAKYYSAAYLKQRGGIGGVIHELYNGKDYSECQENSVFVLHPVLDAVEKVVSPQEWAKDSYLGELSMFDWEPAHHQRQATNYGAVCANPMKSQRYLDEIQRMLGMFLQYGIEDNTSFRGASDDTHAVNFCVSCGSEKVVDVTKSMSSNNQKRWYRCNECTHFTVYTHCGTCNTRLIKNGEYWTYLSLMPMSSINIKCPNCESPV.

It catalyses the reaction (-)-trans-permethrin + H2O = (3-phenoxyphenyl)methanol + (1S,3R)-3-(2,2-dichlorovinyl)-2,2-dimethylcyclopropanecarboxylate + H(+). Inhibited by Hg(2+), Ag(+) and rho-chloromercuribenzoate. In terms of biological role, catalyzes the hydrolysis of pyrethroids pesticides. Hydrolyzes cis-permethrin at approximately equal rate to trans-permethrin. The sequence is that of Pyrethroid hydrolase (estP) from Klebsiella sp.